The following is a 460-amino-acid chain: Cysteine--tRNA ligase (460 aa).

Cys27 is a binding site for Zn(2+). Residues 29 to 39 carry the 'HIGH' region motif; it reads PTVYDDAHLGH. 3 residues coordinate Zn(2+): Cys202, His227, and Glu231. A 'KMSKS' region motif is present at residues 259–263; it reads KMSKS. Lys262 contacts ATP.

It belongs to the class-I aminoacyl-tRNA synthetase family. In terms of assembly, monomer. Requires Zn(2+) as cofactor.

It localises to the cytoplasm. It carries out the reaction tRNA(Cys) + L-cysteine + ATP = L-cysteinyl-tRNA(Cys) + AMP + diphosphate. The sequence is that of Cysteine--tRNA ligase from Campylobacter lari (strain RM2100 / D67 / ATCC BAA-1060).